Consider the following 304-residue polypeptide: MEISEARLTHLKELEAESIHIIREVAAEFDNPVMLYSIGKDSSVMLRLALKAFYPGTPPFPLMHVDTTWKFREMIAFRDRMARESGMELIVHINQEGVEQGIGPFTHGSKVHTDVMKTQSLKQAMDQHRFDAAFGGARRDEEKSRAKERVYSFRDRHHRWDPKGQRPELWQLYNGRVHKGESMRIFPLSNWTELDVWQYIYLEDIPIVPLYYAAERPVVDRDGTLIMVDDERMPLEEGEQPRYEKVRFRTLGCYPLTGAIRSEADTLPEIIQEMLLTRTSERQGRVIDHDSAGSMEEKKRQGYF.

Belongs to the PAPS reductase family. CysD subfamily. Heterodimer composed of CysD, the smaller subunit, and CysN.

The enzyme catalyses sulfate + ATP + H(+) = adenosine 5'-phosphosulfate + diphosphate. It functions in the pathway sulfur metabolism; hydrogen sulfide biosynthesis; sulfite from sulfate: step 1/3. With CysN forms the ATP sulfurylase (ATPS) that catalyzes the adenylation of sulfate producing adenosine 5'-phosphosulfate (APS) and diphosphate, the first enzymatic step in sulfur assimilation pathway. APS synthesis involves the formation of a high-energy phosphoric-sulfuric acid anhydride bond driven by GTP hydrolysis by CysN coupled to ATP hydrolysis by CysD. This is Sulfate adenylyltransferase subunit 2 from Halorhodospira halophila (strain DSM 244 / SL1) (Ectothiorhodospira halophila (strain DSM 244 / SL1)).